The sequence spans 336 residues: Casein kinase II subunit alpha (336 aa).

Positions 32-317 constitute a Protein kinase domain; it reads YEVVRKIGRG…AKEAMAHPYF (286 aa). Residues 38–46 and Lys-61 contribute to the ATP site; that span reads IGRGKYSEV. The Proton acceptor role is filled by Asp-149.

It belongs to the protein kinase superfamily. Ser/Thr protein kinase family. CK2 subfamily. Tetramer composed of two alpha chains, one beta chain and one beta' chain.

The enzyme catalyses L-seryl-[protein] + ATP = O-phospho-L-seryl-[protein] + ADP + H(+). It catalyses the reaction L-threonyl-[protein] + ATP = O-phospho-L-threonyl-[protein] + ADP + H(+). Its function is as follows. Catalytic subunit of a constitutively active serine/threonine-protein kinase complex that phosphorylates a large number of substrates containing acidic residues C-terminal to the phosphorylated serine or threonine. Phosphorylates the frq clock protein thus regulating the circadian clock. This Neurospora crassa (strain ATCC 24698 / 74-OR23-1A / CBS 708.71 / DSM 1257 / FGSC 987) protein is Casein kinase II subunit alpha (cka).